The primary structure comprises 359 residues: 4-hydroxy-3-methylbut-2-en-1-yl diphosphate synthase (flavodoxin) (359 aa).

[4Fe-4S] cluster is bound by residues Cys-264, Cys-267, Cys-299, and Glu-306.

It belongs to the IspG family. Requires [4Fe-4S] cluster as cofactor.

The enzyme catalyses (2E)-4-hydroxy-3-methylbut-2-enyl diphosphate + oxidized [flavodoxin] + H2O + 2 H(+) = 2-C-methyl-D-erythritol 2,4-cyclic diphosphate + reduced [flavodoxin]. It functions in the pathway isoprenoid biosynthesis; isopentenyl diphosphate biosynthesis via DXP pathway; isopentenyl diphosphate from 1-deoxy-D-xylulose 5-phosphate: step 5/6. Its function is as follows. Converts 2C-methyl-D-erythritol 2,4-cyclodiphosphate (ME-2,4cPP) into 1-hydroxy-2-methyl-2-(E)-butenyl 4-diphosphate. This is 4-hydroxy-3-methylbut-2-en-1-yl diphosphate synthase (flavodoxin) from Mycoplasmoides gallisepticum (strain R(low / passage 15 / clone 2)) (Mycoplasma gallisepticum).